The primary structure comprises 1086 residues: ATP-dependent helicase/deoxyribonuclease subunit B (1086 aa).

The protein belongs to the helicase family. AddB/RexB type 2 subfamily. In terms of assembly, heterodimer of AddA and RexB. Mg(2+) is required as a cofactor.

The heterodimer acts as both an ATP-dependent DNA helicase and an ATP-dependent, dual-direction single-stranded exonuclease. Recognizes the chi site generating a DNA molecule suitable for the initiation of homologous recombination. This subunit has 5' -&gt; 3' nuclease activity but not helicase activity. This chain is ATP-dependent helicase/deoxyribonuclease subunit B, found in Streptococcus uberis (strain ATCC BAA-854 / 0140J).